The following is a 264-amino-acid chain: Merozoite surface protein 2 (264 aa).

An N-terminal signal peptide occupies residues 1 to 20 (MKVIKTLSIINFFIFVTFNI). Asn22 and Asn36 each carry an N-linked (GlcNAc...) asparagine glycan. Positions 44–190 (ANEGSNTNSV…PQTAENENPA (147 aa)) are polymorphic region. Residues 46-225 (EGSNTNSVGA…DSQKECTDGN (180 aa)) form a disordered region. A run of 2 repeats spans residues 60–91 (ADTIASGSQRSTNSASTSTTNNGESQTTTPTA) and 92–123 (ADTIASGSQRSTNSASTSTTNNGESQTTTPTA). Residues 60–123 (ADTIASGSQR…GESQTTTPTA (64 aa)) form a 2 X 32 AA perfects repeats region. Residues 70-81 (STNSASTSTTNN) are compositionally biased toward low complexity. Residues 82-101 (GESQTTTPTAADTIASGSQR) are compositionally biased toward polar residues. The segment covering 102-145 (STNSASTSTTNNGESQTTTPTAADTPTTTESNSPSPPITTTESS) has biased composition (low complexity). N-linked (GlcNAc...) asparagine glycosylation is present at Asn152. Residues 154 to 166 (TDGKGEESEKQNE) are compositionally biased toward basic and acidic residues. Asn168 and Asn213 each carry an N-linked (GlcNAc...) asparagine glycan. Cys221 and Cys229 are oxidised to a cystine. Residues Asn237 and Asn238 are each glycosylated (N-linked (GlcNAc...) asparagine). Asn238 carries the GPI-anchor amidated asparagine lipid modification. Residues 239-264 (SSNIASINKFVVLISATLVLSFAIFI) constitute a propeptide, removed in mature form.

The protein localises to the cell membrane. Functionally, may play a role in the merozoite attachment to the erythrocyte. The polypeptide is Merozoite surface protein 2 (Plasmodium falciparum (isolate fid3 / India)).